The following is a 397-amino-acid chain: L-rhamnonate dehydratase (397 aa).

Residues histidine 25 and arginine 51 each contribute to the substrate site. Residues aspartate 217, glutamate 243, and glutamate 271 each coordinate Mg(2+). Histidine 321 functions as the Proton acceptor in the catalytic mechanism. Position 341 (glutamate 341) interacts with substrate.

The protein belongs to the mandelate racemase/muconate lactonizing enzyme family. RhamD subfamily. In terms of assembly, homooctamer; tetramer of dimers. It depends on Mg(2+) as a cofactor.

The enzyme catalyses L-rhamnonate = 2-dehydro-3-deoxy-L-rhamnonate + H2O. It functions in the pathway carbohydrate degradation; L-rhamnose degradation. In terms of biological role, catalyzes the dehydration of L-rhamnonate to 2-keto-3-deoxy-L-rhamnonate (KDR). Also shows activity with L-lyxonate and L-mannonate, with much lower catalytic efficiency. Catalyzes the third step in an alternative pathway for rhamnose utilization that does not involve phosphorylated intermediates. This Sphingomonas sp. (strain SKA58) protein is L-rhamnonate dehydratase.